The sequence spans 326 residues: Malate dehydrogenase (326 aa).

Glycine 12–alanine 18 lines the NAD(+) pocket. Substrate contacts are provided by arginine 93 and arginine 99. NAD(+) is bound by residues asparagine 106, glutamine 113, and valine 130–asparagine 132. Asparagine 132 and arginine 163 together coordinate substrate. Histidine 188 functions as the Proton acceptor in the catalytic mechanism.

This sequence belongs to the LDH/MDH superfamily. MDH type 2 family.

The catalysed reaction is (S)-malate + NAD(+) = oxaloacetate + NADH + H(+). In terms of biological role, catalyzes the reversible oxidation of malate to oxaloacetate. The protein is Malate dehydrogenase of Chlamydia trachomatis serovar A (strain ATCC VR-571B / DSM 19440 / HAR-13).